A 367-amino-acid polypeptide reads, in one-letter code: tRNA-specific 2-thiouridylase MnmA (367 aa).

Residues 24–31 (AMSGGVDS) and L50 each bind ATP. Catalysis depends on C115, which acts as the Nucleophile. A disulfide bridge connects residues C115 and C211. Position 139 (G139) interacts with ATP. Positions 161–163 (KDQ) are interaction with tRNA. C211 acts as the Cysteine persulfide intermediate in catalysis.

It belongs to the MnmA/TRMU family.

The protein localises to the cytoplasm. The enzyme catalyses S-sulfanyl-L-cysteinyl-[protein] + uridine(34) in tRNA + AH2 + ATP = 2-thiouridine(34) in tRNA + L-cysteinyl-[protein] + A + AMP + diphosphate + H(+). In terms of biological role, catalyzes the 2-thiolation of uridine at the wobble position (U34) of tRNA, leading to the formation of s(2)U34. This chain is tRNA-specific 2-thiouridylase MnmA, found in Ehrlichia canis (strain Jake).